We begin with the raw amino-acid sequence, 930 residues long: Protein translocase subunit SecA (930 aa).

Residues glutamine 87, 105 to 109, and aspartate 515 contribute to the ATP site; that span reads GEGKT. 4 residues coordinate Zn(2+): cysteine 914, cysteine 916, cysteine 925, and histidine 926.

It belongs to the SecA family. Monomer and homodimer. Part of the essential Sec protein translocation apparatus which comprises SecA, SecYEG and auxiliary proteins SecDF-YajC and YidC. It depends on Zn(2+) as a cofactor.

The protein resides in the cell inner membrane. It localises to the cytoplasm. It catalyses the reaction ATP + H2O + cellular proteinSide 1 = ADP + phosphate + cellular proteinSide 2.. Part of the Sec protein translocase complex. Interacts with the SecYEG preprotein conducting channel. Has a central role in coupling the hydrolysis of ATP to the transfer of proteins into and across the cell membrane, serving both as a receptor for the preprotein-SecB complex and as an ATP-driven molecular motor driving the stepwise translocation of polypeptide chains across the membrane. The protein is Protein translocase subunit SecA of Burkholderia thailandensis (strain ATCC 700388 / DSM 13276 / CCUG 48851 / CIP 106301 / E264).